The chain runs to 1155 residues: Polarized growth protein rax2 (1155 aa).

An N-terminal signal peptide occupies residues 1–27; sequence MAIYSSFWIRLYFTFRFFCYFLTSVVA. Residues 28-1105 are Extracellular-facing; sequence SDVSFLGDFS…KYDHIGQPRY (1078 aa). N-linked (GlcNAc...) asparagine glycans are attached at residues asparagine 44, asparagine 61, asparagine 103, asparagine 118, asparagine 124, asparagine 156, asparagine 161, asparagine 182, asparagine 190, asparagine 213, asparagine 224, asparagine 306, asparagine 391, asparagine 413, asparagine 419, asparagine 510, asparagine 519, asparagine 554, asparagine 562, asparagine 607, asparagine 630, asparagine 713, asparagine 722, asparagine 743, asparagine 769, asparagine 793, asparagine 807, asparagine 824, asparagine 840, asparagine 848, asparagine 876, asparagine 893, asparagine 899, asparagine 916, asparagine 945, asparagine 1009, asparagine 1030, and asparagine 1055. Residues 1106–1126 traverse the membrane as a helical segment; sequence VVIISLGISIGVMFLIMSGSI. Over 1127–1155 the chain is Cytoplasmic; that stretch reads VVEIIHWFFSEHVETLHDYSNFLKELKTQ.

It belongs to the RAX2 family. In terms of assembly, interacts with for3 and tea1.

The protein resides in the cell membrane. Functionally, controls cell polarity, through the G1 phase of mitosis, via regulation of for3 localization. Required for actin cable formation where it directs the spatial distribution of the actin cables. The sequence is that of Polarized growth protein rax2 from Schizosaccharomyces pombe (strain 972 / ATCC 24843) (Fission yeast).